Here is a 154-residue protein sequence, read N- to C-terminus: Ribonuclease 1 (154 aa).

This sequence belongs to the BetVI family.

The protein resides in the cytoplasm. Its function is as follows. Catalyzes the two-stage endonucleolytic cleavage to 3'-phosphomononucleotides and 3'-phosphooligonucleotides with 2',3'-cyclic phosphate intermediates. This is Ribonuclease 1 from Panax ginseng (Korean ginseng).